Consider the following 208-residue polypeptide: FMN-dependent NADH:quinone oxidoreductase (208 aa).

FMN contacts are provided by residues S9, 15–17 (SAS), 96–99 (MYNF), and 140–143 (TRGG).

It belongs to the azoreductase type 1 family. Homodimer. FMN is required as a cofactor.

The catalysed reaction is 2 a quinone + NADH + H(+) = 2 a 1,4-benzosemiquinone + NAD(+). It catalyses the reaction N,N-dimethyl-1,4-phenylenediamine + anthranilate + 2 NAD(+) = 2-(4-dimethylaminophenyl)diazenylbenzoate + 2 NADH + 2 H(+). Functionally, quinone reductase that provides resistance to thiol-specific stress caused by electrophilic quinones. In terms of biological role, also exhibits azoreductase activity. Catalyzes the reductive cleavage of the azo bond in aromatic azo compounds to the corresponding amines. This is FMN-dependent NADH:quinone oxidoreductase from Ralstonia nicotianae (strain ATCC BAA-1114 / GMI1000) (Ralstonia solanacearum).